A 348-amino-acid polypeptide reads, in one-letter code: RNA 3'-terminal phosphate cyclase (348 aa).

ATP is bound by residues Gln-101 and 286–289 (HMAD). Catalysis depends on His-312, which acts as the Tele-AMP-histidine intermediate.

This sequence belongs to the RNA 3'-terminal cyclase family. Type 1 subfamily.

It is found in the cytoplasm. The enzyme catalyses a 3'-end 3'-phospho-ribonucleotide-RNA + ATP = a 3'-end 2',3'-cyclophospho-ribonucleotide-RNA + AMP + diphosphate. Its function is as follows. Catalyzes the conversion of 3'-phosphate to a 2',3'-cyclic phosphodiester at the end of RNA. The mechanism of action of the enzyme occurs in 3 steps: (A) adenylation of the enzyme by ATP; (B) transfer of adenylate to an RNA-N3'P to produce RNA-N3'PP5'A; (C) and attack of the adjacent 2'-hydroxyl on the 3'-phosphorus in the diester linkage to produce the cyclic end product. The biological role of this enzyme is unknown but it is likely to function in some aspects of cellular RNA processing. This chain is RNA 3'-terminal phosphate cyclase, found in Pyrobaculum aerophilum (strain ATCC 51768 / DSM 7523 / JCM 9630 / CIP 104966 / NBRC 100827 / IM2).